Here is a 210-residue protein sequence, read N- to C-terminus: Imidazoleglycerol-phosphate dehydratase (210 aa).

The protein belongs to the imidazoleglycerol-phosphate dehydratase family.

The protein localises to the cytoplasm. The catalysed reaction is D-erythro-1-(imidazol-4-yl)glycerol 3-phosphate = 3-(imidazol-4-yl)-2-oxopropyl phosphate + H2O. Its pathway is amino-acid biosynthesis; L-histidine biosynthesis; L-histidine from 5-phospho-alpha-D-ribose 1-diphosphate: step 6/9. The sequence is that of Imidazoleglycerol-phosphate dehydratase from Acidovorax ebreus (strain TPSY) (Diaphorobacter sp. (strain TPSY)).